A 306-amino-acid polypeptide reads, in one-letter code: NAD kinase 1 (306 aa).

Aspartate 67 (proton acceptor) is an active-site residue. NAD(+)-binding positions include aspartate 67 to glycine 68, asparagine 149 to glutamate 150, aspartate 181, and threonine 192 to serine 197.

The protein belongs to the NAD kinase family. It depends on a divalent metal cation as a cofactor.

The protein localises to the cytoplasm. It catalyses the reaction NAD(+) + ATP = ADP + NADP(+) + H(+). In terms of biological role, involved in the regulation of the intracellular balance of NAD and NADP, and is a key enzyme in the biosynthesis of NADP. Catalyzes specifically the phosphorylation on 2'-hydroxyl of the adenosine moiety of NAD to yield NADP. This Trichormus variabilis (strain ATCC 29413 / PCC 7937) (Anabaena variabilis) protein is NAD kinase 1.